A 302-amino-acid polypeptide reads, in one-letter code: Stanniocalcin-2 (302 aa).

The signal sequence occupies residues Met-1 to Gly-24. Positions Arg-23–Arg-44 are disordered. Asn-73 carries an N-linked (GlcNAc...) asparagine glycan. The interval Pro-218–Arg-302 is disordered. Over residues Pro-227–Ser-264 the composition is skewed to basic and acidic residues. 2 positions are modified to phosphoserine: Ser-250 and Ser-251. At Thr-254 the chain carries Phosphothreonine.

It belongs to the stanniocalcin family. As to quaternary structure, homodimer; disulfide-linked.

The protein resides in the secreted. In terms of biological role, has an anti-hypocalcemic action on calcium and phosphate homeostasis. This Macaca nemestrina (Pig-tailed macaque) protein is Stanniocalcin-2 (STC2).